A 180-amino-acid polypeptide reads, in one-letter code: Adenine phosphoribosyltransferase (180 aa).

This sequence belongs to the purine/pyrimidine phosphoribosyltransferase family. Homodimer.

The protein localises to the cytoplasm. The enzyme catalyses AMP + diphosphate = 5-phospho-alpha-D-ribose 1-diphosphate + adenine. Its pathway is purine metabolism; AMP biosynthesis via salvage pathway; AMP from adenine: step 1/1. Its function is as follows. Catalyzes a salvage reaction resulting in the formation of AMP, that is energically less costly than de novo synthesis. The protein is Adenine phosphoribosyltransferase of Butyrivibrio fibrisolvens.